Reading from the N-terminus, the 151-residue chain is Neuroglobin (151 aa).

A Globin domain is found at 1–149 (MERPEQELIR…VVQAMSRGWD (149 aa)). Heme b-binding residues include histidine 64 and histidine 96.

Belongs to the globin family. As to quaternary structure, monomer. Homodimer and homotetramer; disulfide-linked. Mainly monomeric but also detected as part of homodimers and homotetramers. Interacts with 14-3-3 proteins; regulates the phosphorylation of NGB. Could interact (ferrous form) with G-alpha(i) proteins (GTP-bound form). Phosphorylated during hypoxia by ERK1/ERK2. Phosphorylation regulates the heme pocket hexacoordination preventing the association of His-64 with the heme metal center. Thereby, promotes the access of dioxygen and nitrite to the heme and stimulates the nitrite reductase activity. Phosphorylation during hypoxia is stabilized by 14-3-3 proteins.

Its subcellular location is the cytoplasm. The protein resides in the cytosol. It localises to the mitochondrion matrix. The catalysed reaction is Fe(III)-heme b-[protein] + nitric oxide + H2O = Fe(II)-heme b-[protein] + nitrite + 2 H(+). Monomeric globin with a bis-histidyl six-coordinate heme-iron atom through which it can bind dioxygen, carbon monoxide and nitric oxide. Could help transport oxygen and increase its availability to the metabolically active neuronal tissues, though its low quantity in tissues as well as its high affinity for dioxygen, which may limit its oxygen-releasing ability, argue against it. The ferrous/deoxygenated form exhibits a nitrite reductase activity and it could produce nitric oxide which in turn inhibits cellular respiration in response to hypoxia. In its ferrous/deoxygenated state, it may also exhibit GDI (Guanine nucleotide Dissociation Inhibitor) activity toward heterotrimeric G-alpha proteins, thereby regulating signal transduction to facilitate neuroprotective responses in the wake of hypoxia and associated oxidative stress. The polypeptide is Neuroglobin (Oryctolagus cuniculus (Rabbit)).